A 542-amino-acid chain; its full sequence is DM7 family protein GG17591 (542 aa).

Positions 415–430 (GETQEMDEAHPTKEES) are enriched in basic and acidic residues. A disordered region spans residues 415-443 (GETQEMDEAHPTKEESKSEEEGEVQSGSQ).

Belongs to the DM7 family.

This is DM7 family protein GG17591 from Drosophila erecta (Fruit fly).